The following is a 430-amino-acid chain: Agropine synthesis reductase (430 aa).

203-227 (LISGPSRGIGKAIAENLIAHGYRMS) contributes to the NAD(+) binding site. Ser333 contributes to the substrate binding site. Tyr346 functions as the Proton acceptor in the catalytic mechanism.

The protein belongs to the short-chain dehydrogenases/reductases (SDR) family.

It functions in the pathway opine metabolism; mannopine biosynthesis. Its function is as follows. Reduces deoxy-fructosyl-glutamine to mannopine. This Rhizobium rhizogenes (Agrobacterium rhizogenes) protein is Agropine synthesis reductase (mas1).